Here is a 283-residue protein sequence, read N- to C-terminus: Protease HtpX homolog (283 aa).

2 consecutive transmembrane segments (helical) span residues 7–27 (TAVL…VLGG) and 29–49 (QGMA…YWFS). His131 contacts Zn(2+). Glu132 is a catalytic residue. His135 contributes to the Zn(2+) binding site. The next 2 helical transmembrane spans lie at 146 to 166 (ISAT…FFGG) and 177 to 197 (IAGI…QMAI). Glu202 contributes to the Zn(2+) binding site.

It belongs to the peptidase M48B family. Zn(2+) serves as cofactor.

Its subcellular location is the cell inner membrane. This chain is Protease HtpX homolog, found in Methylibium petroleiphilum (strain ATCC BAA-1232 / LMG 22953 / PM1).